Reading from the N-terminus, the 238-residue chain is B-box zinc finger protein 25 (238 aa).

Residues cysteine 5, cysteine 8, cysteine 28, histidine 33, cysteine 57, cysteine 60, cysteine 80, and histidine 85 each coordinate Zn(2+). The B box-type 1; atypical zinc finger occupies 5-47 (CDVCEKAPATLICCADEAALCAKCDVEVHAANKLASKHQRLFL). The B box-type 2; atypical zinc finger occupies 57–99 (CDICLEKAAFIFCVEDRALLCRDCDEATHAPNTRSANHQRFLA). A disordered region spans residues 115–139 (VEKNHFDPSNQQSLSKPPTQQPAAP). Positions 121 to 137 (DPSNQQSLSKPPTQQPA) are enriched in polar residues. Residues 226–238 (DDEEEHFLVPDLG) form an interaction with COP1 region.

As to quaternary structure, interacts with COP1 WD40 domain. Interacts with HY5 and HYH. In terms of processing, COP1-mediated ubiquitination and subsequent proteasomal degradation of BBX25/STH occurs in the dark.

It is found in the nucleus. In terms of biological role, acts as a negative regulator of seedling photomorphogenesis. BBX25/STH and BBX24/STO function as transcriptional corepressors of HY5 activity, leading to the down-regulation of BBX22 expression. BBX25/STH acts additively with BBX24/STO during de-etiolation and the hypocotyl shade avoidance response. The sequence is that of B-box zinc finger protein 25 from Arabidopsis thaliana (Mouse-ear cress).